The primary structure comprises 481 residues: tRNA-guanine(15) transglycosylase (481 aa).

Catalysis depends on D87, which acts as the Nucleophile. Positions 122 and 191 each coordinate substrate. C273, C275, and C278 together coordinate Zn(2+).

The protein belongs to the archaeosine tRNA-ribosyltransferase family. It depends on Zn(2+) as a cofactor.

It carries out the reaction guanosine(15) in tRNA + 7-cyano-7-deazaguanine = 7-cyano-7-carbaguanosine(15) in tRNA + guanine. It participates in tRNA modification; archaeosine-tRNA biosynthesis. Its function is as follows. Exchanges the guanine residue with 7-cyano-7-deazaguanine (preQ0) at position 15 in the dihydrouridine loop (D-loop) of archaeal tRNAs. The polypeptide is tRNA-guanine(15) transglycosylase (Archaeoglobus fulgidus (strain ATCC 49558 / DSM 4304 / JCM 9628 / NBRC 100126 / VC-16)).